The primary structure comprises 541 residues: MDLYLLASGRKFGVVKSDCISNNGVNVKDVGNALNEGVVGAIDATRKMVVSLGTVMPEIQKCGVTFEESSEDVSDFYLVRWDSIDDPLNPKNWPMWKKWIVVVQISLIAFVVTFGSSVYSSGIGNVSMDFGVSISVSSLGSCVFLVGFGFGSLPFAPLSGIYGRFVVYFCTLLMFTLFQIGGGCAQNIWTLVILRFFQGFFGSTPLSNCGGTLSDLFTPIQRTYVLPGFCTFPFLGPIFGPIIGDFICQSYLGWCWVFWINMIMGAVVIVIIFFFMPETHGDTILDYKARYLRNKTRNMKWHTIHERQRNPRSAIYQACTDSVSLLITEPIVVCFTLYLTVVYIIGYIDFEGYPIVFAKYSFDQGEIGLSFIGIGIGIVLAGACTPIIYVHYNRVYTRRNGVMSPEDRLYPLFFGSIMLPISMFWFAWTCYPYHPYVHWIVPLISSIFFGWSLLFVFFVSYNYIIDSYQKLAASALAAATLVRYAASGGMSLVGRPMYVNLGDHWATSLLGFISVGMIPIPFLFFIYGKKIRGLSKHAYKL.

The next 12 helical transmembrane spans lie at 99–119 (WIVV…SSVY), 131–153 (GVSI…FGSL), 165–185 (FVVY…GGCA), 187–207 (NIWT…TPLS), 224–244 (YVLP…PIIG), 256–276 (WVFW…FFFM), 325–345 (LLIT…VYII), 367–387 (IGLS…CTPI), 409–429 (LYPL…FAWT), 439–459 (WIVP…VFFV), 472–494 (AASA…SLVG), and 508–528 (SLLG…FIYG).

Belongs to the major facilitator superfamily. CAR1 family.

It is found in the membrane. This is an uncharacterized protein from Schizosaccharomyces pombe (strain 972 / ATCC 24843) (Fission yeast).